Here is a 309-residue protein sequence, read N- to C-terminus: Tagatose-6-phosphate kinase (309 aa).

This sequence belongs to the carbohydrate kinase PfkB family. LacC subfamily.

It catalyses the reaction D-tagatofuranose 6-phosphate + ATP = D-tagatofuranose 1,6-bisphosphate + ADP + H(+). The protein operates within carbohydrate metabolism; D-tagatose 6-phosphate degradation; D-glyceraldehyde 3-phosphate and glycerone phosphate from D-tagatose 6-phosphate: step 1/2. The chain is Tagatose-6-phosphate kinase from Streptococcus pneumoniae (strain ATCC 700669 / Spain 23F-1).